Reading from the N-terminus, the 70-residue chain is Putative membrane protein insertion efficiency factor (70 aa).

This sequence belongs to the UPF0161 family.

It is found in the cell membrane. Functionally, could be involved in insertion of integral membrane proteins into the membrane. In Symbiobacterium thermophilum (strain DSM 24528 / JCM 14929 / IAM 14863 / T), this protein is Putative membrane protein insertion efficiency factor.